The chain runs to 177 residues: Large ribosomal subunit protein uL10 (177 aa).

Belongs to the universal ribosomal protein uL10 family. In terms of assembly, part of the ribosomal stalk of the 50S ribosomal subunit. The N-terminus interacts with L11 and the large rRNA to form the base of the stalk. The C-terminus forms an elongated spine to which L12 dimers bind in a sequential fashion forming a multimeric L10(L12)X complex.

Functionally, forms part of the ribosomal stalk, playing a central role in the interaction of the ribosome with GTP-bound translation factors. This is Large ribosomal subunit protein uL10 from Leptospira biflexa serovar Patoc (strain Patoc 1 / Ames).